Here is a 180-residue protein sequence, read N- to C-terminus: Adenine phosphoribosyltransferase (180 aa).

Ser2 carries the post-translational modification N-acetylserine. 3 positions are modified to phosphoserine: Ser4, Ser15, and Ser30. Tyr60 carries the post-translational modification Phosphotyrosine. A Phosphoserine modification is found at Ser66. Position 114 is an N6-acetyllysine (Lys114). Phosphothreonine is present on Thr135.

It belongs to the purine/pyrimidine phosphoribosyltransferase family. Homodimer.

The protein localises to the cytoplasm. It carries out the reaction AMP + diphosphate = 5-phospho-alpha-D-ribose 1-diphosphate + adenine. The protein operates within purine metabolism; AMP biosynthesis via salvage pathway; AMP from adenine: step 1/1. In terms of biological role, catalyzes a salvage reaction resulting in the formation of AMP, that is energically less costly than de novo synthesis. The polypeptide is Adenine phosphoribosyltransferase (Mus pahari (Gairdner's shrew-mouse)).